The chain runs to 126 residues: Large ribosomal subunit protein bL12 (126 aa).

The protein belongs to the bacterial ribosomal protein bL12 family. As to quaternary structure, homodimer. Part of the ribosomal stalk of the 50S ribosomal subunit. Forms a multimeric L10(L12)X complex, where L10 forms an elongated spine to which 2 to 4 L12 dimers bind in a sequential fashion. Binds GTP-bound translation factors.

Forms part of the ribosomal stalk which helps the ribosome interact with GTP-bound translation factors. Is thus essential for accurate translation. The chain is Large ribosomal subunit protein bL12 from Nitrosospira multiformis (strain ATCC 25196 / NCIMB 11849 / C 71).